The sequence spans 91 residues: Gas vesicle protein K (91 aa).

The protein belongs to the gas vesicle GvpK family.

It localises to the gas vesicle. Its function is as follows. Might be involved in nucleating gas vesicle formation. Gas vesicles are hollow, gas filled proteinaceous nanostructures found in some microorganisms. It is not clear what function gas vesicles perform in soil bacteria. This chain is Gas vesicle protein K, found in Streptomyces sp. (strain CB03234).